The sequence spans 232 residues: Lipoarabinomannan carrier protein LprG (232 aa).

The first 21 residues, 1–21, serve as a signal peptide directing secretion; the sequence is MQTRLTAILAAFLTAVALLAG. Cys-22 carries the N-palmitoyl cysteine lipid modification. Cys-22 is lipidated: S-diacylglycerol cysteine.

This sequence belongs to the LppX/LprAFG lipoprotein family. Modified by Lgt on Cys-22 with an S-linked diacylglyceral, signal peptide is removed by LspA, Cys-22 is further modifed with a fatty acid on its amino group by Lnt yielding a triacylated protein.

The protein localises to the cell inner membrane. Functionally, helps membrane protein MHAS_02168/C731_2106 (P55) transport triacylglycerides (TAG) across the inner cell membrane into the periplasm and probably ultimately to the outer membrane. Binds TAG in its hydrophobic cavity and transfers it between lipid bilayers. TAG probably regulates lipid metabolism and growth regulation and plays a structural role in the outer membrane. Also binds mannosides, lipoarabinomannan and lipomannan and various glycolipids in the same cavity. The lprG-MHAS_02167/C731_2107 operon complements the vancomycin sensitivity of an M.smegmatis knockout of the same operon. The protein is Lipoarabinomannan carrier protein LprG of Mycolicibacterium hassiacum (strain DSM 44199 / CIP 105218 / JCM 12690 / 3849) (Mycobacterium hassiacum).